A 155-amino-acid polypeptide reads, in one-letter code: uncharacterized protein (155 aa).

One can recognise an N-acetyltransferase domain in the interval Leu-7–Gln-154.

This is an uncharacterized protein from Brevibacillus brevis (strain 47 / JCM 6285 / NBRC 100599).